Consider the following 74-residue polypeptide: uncharacterized protein (74 aa).

Residues 25–62 are a coiled coil; sequence QQTIDRLAGLELRMKQLIRAIEVNNELLRTMQEQQNRV.

This is an uncharacterized protein from Bacillus subtilis (strain 168).